The primary structure comprises 418 residues: Actin-like protein 7B (418 aa).

The segment at 1–42 (MATKNSPSPKPMGTAQGDPGEAGTLPAPEAAGIRDTGSTQLK) is disordered. At serine 8 the chain carries Phosphoserine.

The protein belongs to the actin family. In terms of tissue distribution, testis specific.

The protein resides in the cytoplasm. It localises to the cytoskeleton. In Mus musculus (Mouse), this protein is Actin-like protein 7B (Actl7b).